A 91-amino-acid polypeptide reads, in one-letter code: Alpha-elapitoxin-Oh2b (91 aa).

An N-terminal signal peptide occupies residues 1-21; sequence MKTLLLTLVVMTIVCLDLGYT. Cystine bridges form between Cys24-Cys41, Cys34-Cys62, Cys47-Cys51, Cys66-Cys77, and Cys78-Cys83.

Belongs to the three-finger toxin family. Long-chain subfamily. Type II alpha-neurotoxin sub-subfamily. In terms of assembly, monomer. In terms of tissue distribution, expressed by the venom gland.

The protein resides in the secreted. Binds with high affinity to muscular (alpha-1/CHRNA1) and neuronal (alpha-7/CHRNA7) nicotinic acetylcholine receptor (nAChR) and inhibits acetylcholine from binding to the receptor, thereby impairing neuromuscular and neuronal transmission. Recombinant LNTX1 leads to a functional block of the muscle-type acetylcholine receptors. Has a cytotoxic activity. This neurotoxin is lethal. The chain is Alpha-elapitoxin-Oh2b from Ophiophagus hannah (King cobra).